Consider the following 125-residue polypeptide: Egg cell-secreted protein 1.3 (125 aa).

The N-terminal stretch at 1-24 (MASNTSFLFVTVTLLLVLNVSSRA) is a signal peptide.

This sequence belongs to the plant egg cell-secreted peptide family. In terms of tissue distribution, restricted to female reproductive tissues, specifically accumulating in storage vesicles of the unfertilized egg cell.

It is found in the cytoplasmic vesicle. Its subcellular location is the secreted. Functionally, involved in the regulation of gamete interactions during the double fertilization and to prevent multiple-pollen tube attraction; mediates the redistribution of the gamete fusogen HAP2/GCS1 to the cell surface after secretion upon sperm arrival. The polypeptide is Egg cell-secreted protein 1.3 (EC1.3) (Arabidopsis thaliana (Mouse-ear cress)).